Reading from the N-terminus, the 396-residue chain is NADH-quinone oxidoreductase subunit D (396 aa).

It belongs to the complex I 49 kDa subunit family. NDH-1 is composed of 14 different subunits. Subunits NuoB, C, D, E, F, and G constitute the peripheral sector of the complex.

It localises to the cell inner membrane. The enzyme catalyses a quinone + NADH + 5 H(+)(in) = a quinol + NAD(+) + 4 H(+)(out). In terms of biological role, NDH-1 shuttles electrons from NADH, via FMN and iron-sulfur (Fe-S) centers, to quinones in the respiratory chain. The immediate electron acceptor for the enzyme in this species is believed to be ubiquinone. Couples the redox reaction to proton translocation (for every two electrons transferred, four hydrogen ions are translocated across the cytoplasmic membrane), and thus conserves the redox energy in a proton gradient. This chain is NADH-quinone oxidoreductase subunit D, found in Chelativorans sp. (strain BNC1).